The chain runs to 81 residues: UPF0181 protein Spro_2806 (81 aa).

The segment at 43–81 is disordered; that stretch reads EKHQGDQVSVMFDDEDDDEEYQERPDDQADDDSEEDENY. 2 stretches are compositionally biased toward acidic residues: residues 54–63 and 70–81; these read FDDEDDDEEY and QADDDSEEDENY.

It belongs to the UPF0181 family.

The chain is UPF0181 protein Spro_2806 from Serratia proteamaculans (strain 568).